Here is a 325-residue protein sequence, read N- to C-terminus: Proto-oncogene Mas (325 aa).

The Extracellular portion of the chain corresponds to 1 to 36 (MDGSNVTSFVVEEPTNISTGRNASVGNAHRQIPIVH). 3 N-linked (GlcNAc...) asparagine glycosylation sites follow: N5, N16, and N22. A helical membrane pass occupies residues 37–61 (WVIMSISPVGFVENGILLWFLCFRM). Residues 62–65 (RRNP) are Cytoplasmic-facing. Residues 66 to 86 (FTVYITHLSIADISLLFCIFI) traverse the membrane as a helical segment. Over 87-104 (LSIDYALDYELSSGHYYT) the chain is Extracellular. Residues 105–128 (IVTLSVTFLFGYNTGLYLLTAISV) form a helical membrane-spanning segment. Residues 129-149 (ERCLSVLYPIWYRCHRPKYQS) lie on the Cytoplasmic side of the membrane. Residues 150–172 (ALVCALLWALSCLVTTMEYVMCI) traverse the membrane as a helical segment. At 173 to 185 (DREEESHSRNDCR) the chain is on the extracellular side. Residues 186–206 (AVIIFIAILSFLVFTPLMLVS) form a helical membrane-spanning segment. At 207–224 (STILVVKIRKNTWASHSS) the chain is on the cytoplasmic side. Residues 225-245 (KLYIVIMVTIIIFLIFAMPMR) traverse the membrane as a helical segment. The Extracellular portion of the chain corresponds to 246–263 (LLYLLYYEYWSTFGNLHH). The helical transmembrane segment at 264-284 (ISLLFSTINSSANPFIYFFVG) threads the bilayer. Residues 285–325 (SSKKKRFKESLKVVLTRAFKDEMQPRRQKDNCNTVTVETVV) lie on the Cytoplasmic side of the membrane.

This sequence belongs to the G-protein coupled receptor 1 family. As to quaternary structure, interacts with AGTR1. Interacts with FLNA (via filamin repeat 21); increases PKA-mediated phosphorylation of FLNA.

Its subcellular location is the cell membrane. Receptor for angiotensin 1-7. Acts specifically as a functional antagonist of AGTR1 (angiotensin-2 type 1 receptor), although it up-regulates AGTR1 receptor levels. Positive regulation of AGTR1 levels occurs through activation of the G-proteins GNA11 and GNAQ, and stimulation of the protein kinase C signaling cascade. The antagonist effect on AGTR1 function is probably due to AGTR1 being physically altered by MAS1. This Homo sapiens (Human) protein is Proto-oncogene Mas (MAS1).